The following is a 554-amino-acid chain: Chaperonin GroEL (554 aa).

Residues 30 to 33 (TLGP), Lys51, 87 to 91 (DGTTT), Gly415, 478 to 480 (DAA), and Asp494 each bind ATP.

This sequence belongs to the chaperonin (HSP60) family. Forms a cylinder of 14 subunits composed of two heptameric rings stacked back-to-back. Interacts with the co-chaperonin GroES.

Its subcellular location is the cytoplasm. The enzyme catalyses ATP + H2O + a folded polypeptide = ADP + phosphate + an unfolded polypeptide.. In terms of biological role, together with its co-chaperonin GroES, plays an essential role in assisting protein folding. The GroEL-GroES system forms a nano-cage that allows encapsulation of the non-native substrate proteins and provides a physical environment optimized to promote and accelerate protein folding. The chain is Chaperonin GroEL from Pelobacter propionicus (strain DSM 2379 / NBRC 103807 / OttBd1).